Here is a 461-residue protein sequence, read N- to C-terminus: D-phenylhydantoinase (461 aa).

3 residues coordinate a divalent metal cation: histidine 59, histidine 61, and lysine 151. An N6-carboxylysine modification is found at lysine 151. Tyrosine 156 is a binding site for substrate. 2 residues coordinate a divalent metal cation: histidine 182 and histidine 239. Residue serine 286 coordinates substrate. Aspartate 313 is a binding site for a divalent metal cation. Asparagine 335 lines the substrate pocket.

Belongs to the metallo-dependent hydrolases superfamily. Hydantoinase/dihydropyrimidinase family. In terms of assembly, homotetramer. A divalent metal cation is required as a cofactor. Post-translationally, carboxylation allows a single lysine to coordinate two divalent metal cations.

The enzyme catalyses D-5-phenylhydantoin + H2O = N-carbamoyl-D-phenylglycine + H(+). In terms of biological role, catalyzes the stereospecific hydrolysis of the cyclic amide bond of D-hydantoin derivatives with an aromatic side chains at the 5'-position. Has no activity on dihydropyrimidines. The physiological function is unknown. In Escherichia coli O7:K1 (strain IAI39 / ExPEC), this protein is D-phenylhydantoinase.